We begin with the raw amino-acid sequence, 403 residues long: Dynactin subunit 2-A (403 aa).

Residues 1-26 (MADPKYADLPGIARNEPDVYETSDLP) form a disordered region. Residues 99–132 (PQQKYQRLLHEVQELTQEVEKTQSTVKESAAEEK) are a coiled coil. The segment at 183-203 (AAKTRKNPEGKSPAKGPGPDT) is disordered. Positions 381–401 (KENLATVEDNFSNIDGRIKKL) form a coiled coil.

The protein belongs to the dynactin subunit 2 family. Subunit of dynactin, a multiprotein complex part of a tripartite complex with dynein and a adapter, such as BICDL1, BICD2 or HOOK3. The dynactin complex is built around ACTR1A/ACTB filament and consists of an actin-related filament composed of a shoulder domain, a pointed end and a barbed end. Its length is defined by its flexible shoulder domain. The soulder is composed of 2 DCTN1 subunits, 4 DCTN2 and 2 DCTN3.

The protein localises to the cytoplasm. It localises to the cytoskeleton. The protein resides in the microtubule organizing center. It is found in the centrosome. Its subcellular location is the membrane. Part of the dynactin complex that activates the molecular motor dynein for ultra-processive transport along microtubules. In the dynactin soulder domain, binds the ACTR1A filament and acts as a molecular ruler to determine the length. Modulates cytoplasmic dynein binding to an organelle, and plays a role in prometaphase chromosome alignment and spindle organization during mitosis. Involved in anchoring microtubules to centrosomes. The polypeptide is Dynactin subunit 2-A (dctn2-a) (Xenopus laevis (African clawed frog)).